The primary structure comprises 144 residues: 3-dehydroquinate dehydratase (144 aa).

The active-site Proton acceptor is Y22. 3 residues coordinate substrate: N73, H79, and D86. H99 functions as the Proton donor in the catalytic mechanism. Substrate contacts are provided by residues 100-101 (LS) and R110.

Belongs to the type-II 3-dehydroquinase family. Homododecamer.

The catalysed reaction is 3-dehydroquinate = 3-dehydroshikimate + H2O. The protein operates within metabolic intermediate biosynthesis; chorismate biosynthesis; chorismate from D-erythrose 4-phosphate and phosphoenolpyruvate: step 3/7. Its function is as follows. Catalyzes a trans-dehydration via an enolate intermediate. This is 3-dehydroquinate dehydratase from Pelotomaculum thermopropionicum (strain DSM 13744 / JCM 10971 / SI).